The primary structure comprises 235 residues: Attacin-E (235 aa).

The N-terminal stretch at 1-19 (MFGKIVFLLLVALCAGVQS) is a signal peptide. The propeptide occupies 20–47 (RYLIVSEPVYYIEHYEEPELLASSRVRR).

It belongs to the attacin/sarcotoxin-2 family. Post-translationally, attacin F appears to be derived by proteolytic digestion of attacin E.

The protein resides in the secreted. Its function is as follows. Hemolymph antibacterial protein. This is Attacin-E from Hyalophora cecropia (Cecropia moth).